We begin with the raw amino-acid sequence, 236 residues long: Purine nucleoside phosphorylase DeoD-type (236 aa).

Residue H4 participates in a purine D-ribonucleoside binding. Phosphate contacts are provided by residues G20, R24, R43, and 87–90; that span reads RVGT. Residues 179–181 and 203–204 each bind a purine D-ribonucleoside; these read EME and SD. The active-site Proton donor is D204.

Belongs to the PNP/UDP phosphorylase family. Homohexamer; trimer of homodimers.

The catalysed reaction is a purine D-ribonucleoside + phosphate = a purine nucleobase + alpha-D-ribose 1-phosphate. It carries out the reaction a purine 2'-deoxy-D-ribonucleoside + phosphate = a purine nucleobase + 2-deoxy-alpha-D-ribose 1-phosphate. Catalyzes the reversible phosphorolytic breakdown of the N-glycosidic bond in the beta-(deoxy)ribonucleoside molecules, with the formation of the corresponding free purine bases and pentose-1-phosphate. In Streptococcus pneumoniae (strain CGSP14), this protein is Purine nucleoside phosphorylase DeoD-type.